Here is a 108-residue protein sequence, read N- to C-terminus: AVAKLLAAADVTAALEGCKADDSFNHKVFFQKTGLAKKSNEELEAIFKILDQDKSGFIEDEELELFLQNFSAGARTLTKTETETFLKAGDSDGDGKIGVDEFQKLVKA.

The residue at position 1 (Ala1) is an N-acetylalanine. 2 consecutive EF-hand domains span residues 38–73 (KSNEELEAIFKILDQDKSGFIEDEELELFLQNFSAG) and 77–108 (LTKTETETFLKAGDSDGDGKIGVDEFQKLVKA). Residues Asp51, Asp53, Ser55, Phe57, Glu59, Glu62, Asp90, Asp92, Asp94, Lys96, and Glu101 each coordinate Ca(2+).

It belongs to the parvalbumin family.

In muscle, parvalbumin is thought to be involved in relaxation after contraction. It binds two calcium ions. This Latimeria chalumnae (Coelacanth) protein is Parvalbumin beta.